The sequence spans 118 residues: Co-chaperonin GroES (118 aa).

Belongs to the GroES chaperonin family. As to quaternary structure, heptamer of 7 subunits arranged in a ring. Interacts with the chaperonin GroEL.

It localises to the cytoplasm. Together with the chaperonin GroEL, plays an essential role in assisting protein folding. The GroEL-GroES system forms a nano-cage that allows encapsulation of the non-native substrate proteins and provides a physical environment optimized to promote and accelerate protein folding. GroES binds to the apical surface of the GroEL ring, thereby capping the opening of the GroEL channel. This is Co-chaperonin GroES from Helicobacter acinonychis (strain Sheeba).